A 98-amino-acid chain; its full sequence is Signal peptidase complex subunit 1 (98 aa).

Topologically, residues 1–18 (MLDIQTHMDFAGQGKAER) are cytoplasmic. A helical transmembrane segment spans residues 19 to 38 (WSRFIITFFGIVGLVYGAFV). Residues 39–42 (QQFS) are Lumenal-facing. Residues 43 to 65 (QTVYILGAGFVLSSLITIPPWPL) form a helical membrane-spanning segment. At 66–98 (YRRNALKWQKPIDTDAKSSSSESGDEGKKKKKQ) the chain is on the cytoplasmic side. The segment at 78–98 (DTDAKSSSSESGDEGKKKKKQ) is disordered. 4 positions are modified to phosphoserine: Ser-84, Ser-85, Ser-86, and Ser-88.

The protein belongs to the SPCS1 family. In terms of assembly, component of the signal peptidase complex (SPC) composed of a catalytic subunit twr/SEC11 and three accessory subunits Spase12/SPCS1, Spase25/SPCS2 and Spase22-23/SPCS3. The complex induces a local thinning of the ER membrane which is used to measure the length of the signal peptide (SP) h-region of protein substrates. This ensures the selectivity of the complex towards h-regions shorter than 18-20 amino acids.

It localises to the endoplasmic reticulum membrane. Component of the signal peptidase complex (SPC) which catalyzes the cleavage of N-terminal signal sequences from nascent proteins as they are translocated into the lumen of the endoplasmic reticulum. Dispensable for SPC enzymatic activity. Functionally, (Microbial infection) Plays an important role in infection by flaviviruses such as West Nile virus and Dengue virus type 2. In Drosophila melanogaster (Fruit fly), this protein is Signal peptidase complex subunit 1 (Spase12).